Here is a 157-residue protein sequence, read N- to C-terminus: uncharacterized protein (157 aa).

This is an uncharacterized protein from Saccharomyces cerevisiae (strain ATCC 204508 / S288c) (Baker's yeast).